The sequence spans 515 residues: MDKKNGGFDLESEIRRLDVSKEFKIEDNLKKKVVKVVAKKDSASSVTKSADLSGVKDSNGVIFSDFDYDIPSSGLENNIKTLEQSNIIKFFNGKDYVEIEKLYDKPITEVRKIVEGLGTNHTIAVTMKKTELIFLLVKILSENNIDVLFTGVLDVLSDGYGFLRTASNSYLSGGNDVYVSPSQIRLFNLRTGDILYGQIRSPRDGERFFAMVKIKSINDQDPTFAQNRIPFDNLTPLYPNVKLNLEYENCNISTRLINLFSPIGKGQRALIVSPPKAGKTTLLQKIANAITTNYSDVILMILLIDERPEEVTDMIRSVKGEVIASNFDEQASRHVQVAEMVIEKAKRLVENKKDVVILLDSITRLARAYNQTMPTSGKILSGGVDSNALHKPKRFFGSARNIEEGGSLTIIATALVDTGSKMDEVIFEEFKSTGNMELILDRSLADRRLFPAINIKKSGTRKEELLLSEEERSKILLIRRILGGVDDYEGVEVLIEKMKKSKNNEIFLKTMSNGN.

Residues 146–221 (DVLFTGVLDV…VKIKSINDQD (76 aa)) enclose the Rho RNA-BD domain. ATP contacts are provided by residues 264-269 (GKGQRA), 276-281 (KAGKTT), and Arg307.

The protein belongs to the Rho family. Homohexamer. The homohexamer assembles into an open ring structure.

Its function is as follows. Facilitates transcription termination by a mechanism that involves Rho binding to the nascent RNA, activation of Rho's RNA-dependent ATPase activity, and release of the mRNA from the DNA template. This is Transcription termination factor Rho from Borreliella burgdorferi (strain ATCC 35210 / DSM 4680 / CIP 102532 / B31) (Borrelia burgdorferi).